The following is a 329-amino-acid chain: MRSLQAPVVCPSVRPRQLGVSALLVNCSVSKTRSLRKQFWGNQTKNDKSQAATVNLRLHLRRYKSIKCLFSSHSDGTGSTAENFNENDEDYVKSSVLEAVEVKSGPDGFMVKMKDGRQLRCVHNNPQGGNLPNYAPHSAIVLKMEDGTGLLLPIIVLEMPSVLLMAAMTNVQIARPTMYQVVKDMVDKMGYEVRLVRVTTRVHEAYFAELYLSKVGDKSDCVSFDLRPSDAINIAVRCKVPIQVNKYLAYSDGMRVIDSGKLSKQTPASDGLLFTELDRPNGQPCFDTKEFDLVRNMMQAVDEERYDEAAEWRDKLGKFQAKRKLRKYT.

The BFN domain maps to 121–256 (CVHNNPQGGN…YLAYSDGMRV (136 aa)). Positions 287 to 322 (DTKEFDLVRNMMQAVDEERYDEAAEWRDKLGKFQAK) constitute a UVR domain.

Belongs to the bifunctional nuclease family.

It is found in the nucleus. Bifunctional nuclease with both RNase and DNase activities. Involved in basal defense response. Participates in abscisic acid-derived callose deposition following infection by a necrotrophic pathogen. This Arabidopsis thaliana (Mouse-ear cress) protein is Bifunctional nuclease 2 (BBD2).